A 433-amino-acid polypeptide reads, in one-letter code: Tol-Pal system protein TolB (433 aa).

An N-terminal signal peptide occupies residues 1 to 21 (MINLFRGLLVVLCFASAMVSA).

The protein belongs to the TolB family. In terms of assembly, the Tol-Pal system is composed of five core proteins: the inner membrane proteins TolA, TolQ and TolR, the periplasmic protein TolB and the outer membrane protein Pal. They form a network linking the inner and outer membranes and the peptidoglycan layer.

The protein localises to the periplasm. Functionally, part of the Tol-Pal system, which plays a role in outer membrane invagination during cell division and is important for maintaining outer membrane integrity. This Pseudomonas syringae pv. syringae (strain B728a) protein is Tol-Pal system protein TolB.